Consider the following 625-residue polypeptide: uncharacterized protein (625 aa).

Positions 23–51 (CLACRRKKLKCDHGRPCSNCLKRSTIQSC) form a DNA-binding region, zn(2)-C6 fungal-type. A compositionally biased stretch (polar residues) spans 93-113 (GTKSQSDYENQQSHNLPSTPS). The tract at residues 93–119 (GTKSQSDYENQQSHNLPSTPSADAETQ) is disordered.

Its subcellular location is the nucleus. The protein localises to the cytoplasm. It is found in the cytoskeleton. The protein resides in the spindle. This is an uncharacterized protein from Schizosaccharomyces pombe (strain 972 / ATCC 24843) (Fission yeast).